We begin with the raw amino-acid sequence, 146 residues long: Sperm surface protein Sp17 (146 aa).

A compositionally biased stretch (basic and acidic residues) spans 76–88; that stretch reads EHESEKCEAEEKS. The segment at 76–109 is disordered; sequence EHESEKCEAEEKSQSVTEEETPVLTIDSEDDKDK. The span at 92–108 shows a compositional bias: acidic residues; that stretch reads TEEETPVLTIDSEDDKD. An IQ domain is found at 110 to 139; the sequence is EEMAALKIQAAFRGHLAREDVKKIRTNKAE.

In terms of assembly, homodimer. May interact with ROPN1. In terms of processing, the N-terminus is blocked. As to expression, testis- and sperm-specific.

The protein resides in the membrane. Its function is as follows. Sperm surface zona pellucida binding protein. Helps to bind spermatozoa to the zona pellucida with high affinity. Might function in binding zona pellucida and carbohydrates. The polypeptide is Sperm surface protein Sp17 (SPA17) (Oryctolagus cuniculus (Rabbit)).